Consider the following 128-residue polypeptide: Aspartate 1-decarboxylase (128 aa).

S25 acts as the Schiff-base intermediate with substrate; via pyruvic acid in catalysis. S25 carries the pyruvic acid (Ser) modification. T57 contacts substrate. Y58 serves as the catalytic Proton donor. 73–75 is a substrate binding site; it reads GAA.

This sequence belongs to the PanD family. Heterooctamer of four alpha and four beta subunits. It depends on pyruvate as a cofactor. Post-translationally, is synthesized initially as an inactive proenzyme, which is activated by self-cleavage at a specific serine bond to produce a beta-subunit with a hydroxyl group at its C-terminus and an alpha-subunit with a pyruvoyl group at its N-terminus.

The protein localises to the cytoplasm. The catalysed reaction is L-aspartate + H(+) = beta-alanine + CO2. Its pathway is cofactor biosynthesis; (R)-pantothenate biosynthesis; beta-alanine from L-aspartate: step 1/1. Catalyzes the pyruvoyl-dependent decarboxylation of aspartate to produce beta-alanine. This is Aspartate 1-decarboxylase from Caldicellulosiruptor bescii (strain ATCC BAA-1888 / DSM 6725 / KCTC 15123 / Z-1320) (Anaerocellum thermophilum).